The primary structure comprises 1191 residues: uncharacterized protein (1191 aa).

WD repeat units follow at residues 558–588 (GHRDGVTSVAISSHKNLIASASRDGTVHLWT), 599–629 (GHTGSIYRVDFSPNGKIFATAGQDQTVKIWD), 640–670 (GHQDSVYSVSFSPDGEILASTSRDRTVRLWH), 682–712 (GHTKSVDDAQFSPDGQTLVSVCRDGQIRLWD), 723–753 (LPEVAFFGVNWHPNGNLLAVAADDGTVRLWT), 764–794 (GHDEFVTRVVFTPDGKQLFSSSSNGSVIHWS), 805–835 (GYPEAIFGLALASNGALLAIGAENNLVKVWD), 995–1025 (QRKEPIRSVSLHPTLPQLAAGDEQGNLTLWN), 1036–1066 (AHGDRLNQLQYSPNGKYLLSAGREGTAKIWS), 1077–1107 (SDPLPIDQIAISPDSQWIATAASDGMVRLWD), and 1118–1148 (STSGSLLGLDFNRQGQWLLAVAQNGDLQSWP).

This is an uncharacterized protein from Synechocystis sp. (strain ATCC 27184 / PCC 6803 / Kazusa).